The primary structure comprises 342 residues: Biotin synthase (342 aa).

Residues 63 to 290 (NTVQLSTLLS…GAMVRLSAGR (228 aa)) form the Radical SAM core domain. C78, C82, and C85 together coordinate [4Fe-4S] cluster. Residues C122, C153, C213, and R285 each contribute to the [2Fe-2S] cluster site.

Belongs to the radical SAM superfamily. Biotin synthase family. In terms of assembly, homodimer. [4Fe-4S] cluster serves as cofactor. It depends on [2Fe-2S] cluster as a cofactor.

It catalyses the reaction (4R,5S)-dethiobiotin + (sulfur carrier)-SH + 2 reduced [2Fe-2S]-[ferredoxin] + 2 S-adenosyl-L-methionine = (sulfur carrier)-H + biotin + 2 5'-deoxyadenosine + 2 L-methionine + 2 oxidized [2Fe-2S]-[ferredoxin]. It functions in the pathway cofactor biosynthesis; biotin biosynthesis; biotin from 7,8-diaminononanoate: step 2/2. Functionally, catalyzes the conversion of dethiobiotin (DTB) to biotin by the insertion of a sulfur atom into dethiobiotin via a radical-based mechanism. This chain is Biotin synthase, found in Cupriavidus pinatubonensis (strain JMP 134 / LMG 1197) (Cupriavidus necator (strain JMP 134)).